Consider the following 65-residue polypeptide: Protein YSY6 (65 aa).

The chain crosses the membrane as a helical span at residues 45 to 65 (LGILLFLLVGGGVLQLISYIL).

It belongs to the RAMP4 family.

It localises to the membrane. It is found in the endoplasmic reticulum membrane. Interacts with target proteins during their translocation into the lumen of the endoplasmic reticulum. Protects unfolded target proteins against degradation during ER stress. May facilitate glycosylation of target proteins after termination of ER stress. This is Protein YSY6 (YSY6) from Saccharomyces cerevisiae (strain ATCC 204508 / S288c) (Baker's yeast).